The sequence spans 198 residues: 8-oxoguanine DNA glycosylase/AP lyase (198 aa).

Active-site residues include Lys122 and Asp140.

Belongs to the type-2 OGG1 family. Monomer.

It catalyses the reaction 2'-deoxyribonucleotide-(2'-deoxyribose 5'-phosphate)-2'-deoxyribonucleotide-DNA = a 3'-end 2'-deoxyribonucleotide-(2,3-dehydro-2,3-deoxyribose 5'-phosphate)-DNA + a 5'-end 5'-phospho-2'-deoxyribonucleoside-DNA + H(+). Functionally, catalyzes the excision of an oxidatively damaged form of guanine (7,8-dihydro-8-oxoguanine = 8-oxoG) from DNA. Also cleaves the DNA backbone at apurinic/apyrimidinic sites (AP sites). Efficiently cleaves oligomers containing 8-oxoG:C and 8-oxoG:G base pairs, and is less effective on oligomers containing 8-oxoG:T and 8-oxoG:A mispairs. This is 8-oxoguanine DNA glycosylase/AP lyase from Archaeoglobus fulgidus (strain ATCC 49558 / DSM 4304 / JCM 9628 / NBRC 100126 / VC-16).